The sequence spans 351 residues: Large ribosomal subunit protein uL3 (351 aa).

Disordered stretches follow at residues 1-31 (MGHR…TPRT) and 246-271 (KGSR…GQLG).

This sequence belongs to the universal ribosomal protein uL3 family. Part of the 50S ribosomal subunit. Forms a cluster with proteins L14 and L24e.

Its function is as follows. One of the primary rRNA binding proteins, it binds directly near the 3'-end of the 23S rRNA, where it nucleates assembly of the 50S subunit. This is Large ribosomal subunit protein uL3 from Saccharolobus islandicus (strain Y.N.15.51 / Yellowstone #2) (Sulfolobus islandicus).